A 408-amino-acid polypeptide reads, in one-letter code: Serine/threonine transporter SstT (408 aa).

9 consecutive transmembrane segments (helical) span residues 11–31 (LANG…VALA), 43–63 (FLGS…VFIL), 82–102 (IVVL…ILSM), 141–161 (ALMT…GLAL), 192–212 (IGIF…AIAG), 216–236 (LLAV…PLIV), 290–310 (IPLG…VLTL), 316–336 (LGIQ…AISA), and 363–383 (VAMQ…AAET).

Belongs to the dicarboxylate/amino acid:cation symporter (DAACS) (TC 2.A.23) family.

The protein localises to the cell inner membrane. The enzyme catalyses L-serine(in) + Na(+)(in) = L-serine(out) + Na(+)(out). The catalysed reaction is L-threonine(in) + Na(+)(in) = L-threonine(out) + Na(+)(out). Its function is as follows. Involved in the import of serine and threonine into the cell, with the concomitant import of sodium (symport system). The chain is Serine/threonine transporter SstT from Shewanella oneidensis (strain ATCC 700550 / JCM 31522 / CIP 106686 / LMG 19005 / NCIMB 14063 / MR-1).